Here is a 62-residue protein sequence, read N- to C-terminus: Photosystem II reaction center protein Z (62 aa).

The next 2 helical transmembrane spans lie at 8-28 (AVFALIVTSFLLVIGVPVVLA) and 41-61 (FSGASLWIGLVFLVGILNSFV).

This sequence belongs to the PsbZ family. PSII is composed of 1 copy each of membrane proteins PsbA, PsbB, PsbC, PsbD, PsbE, PsbF, PsbH, PsbI, PsbJ, PsbK, PsbL, PsbM, PsbT, PsbY, PsbZ, Psb30/Ycf12, at least 3 peripheral proteins of the oxygen-evolving complex and a large number of cofactors. It forms dimeric complexes.

The protein resides in the plastid. Its subcellular location is the chloroplast thylakoid membrane. Functionally, may control the interaction of photosystem II (PSII) cores with the light-harvesting antenna, regulates electron flow through the 2 photosystem reaction centers. PSII is a light-driven water plastoquinone oxidoreductase, using light energy to abstract electrons from H(2)O, generating a proton gradient subsequently used for ATP formation. This chain is Photosystem II reaction center protein Z, found in Zygnema circumcarinatum (Green alga).